The chain runs to 542 residues: Cytochrome P450 79B1 (542 aa).

A helical transmembrane segment spans residues 21-41 (FSNMYLLTTLQAFVAITLVML). C478 serves as a coordination point for heme.

It belongs to the cytochrome P450 family. It depends on heme as a cofactor.

Its subcellular location is the membrane. Functionally, converts tyrosine to para-hydrophenylacetaldoxime in para-hydroxybenzylglucosinolate biosynthesis. This Sinapis alba (White mustard) protein is Cytochrome P450 79B1 (CYP79B1).